We begin with the raw amino-acid sequence, 4462 residues long: Dynein axonemal heavy chain 17 (4462 aa).

Positions 1–1808 (MTMAPDVRLE…FANICDAQIQ (1808 aa)) are stem. TPR repeat units follow at residues 1019–1052 (TWTD…VSKC) and 1702–1736 (IWWT…QLNV). AAA regions lie at residues 1809–2030 (YSYE…VLVV), 2090–2311 (KIIK…FGFK), 2417–2665 (ELDP…IFQG), and 2763–3012 (SYNE…ERRY). ATP is bound by residues 1847 to 1854 (GPAGTGKT), 2128 to 2135 (GNAGSGKS), 2455 to 2462 (GNAGTGKS), and 2801 to 2808 (GVGGSGKQ). Coiled coils occupy residues 3027–3086 (YQNL…LIQV) and 3257–3309 (DVAP…EKIK). Residues 3027–3313 (YQNLLAKKRT…TAEKIKCQQE (287 aa)) are stalk. AAA stretches follow at residues 3405 to 3632 (LTDD…EIEE) and 3842 to 4068 (IKNF…VLYN). Residues 4147-4182 (PESPYLYGLHPNAEIGFLTVTSEKLFRTVLEMQPKE) form a TPR 3 repeat.

This sequence belongs to the dynein heavy chain family. Consists of at least two heavy chains and a number of intermediate and light chains. As to expression, expressed in testis. Expressed in spermatozoa (at protein level). Not detected in airway epithelial cells (at protein level).

The protein resides in the cytoplasm. The protein localises to the cytoskeleton. It is found in the flagellum axoneme. In terms of biological role, force generating protein component of the outer dynein arms (ODAs) in the sperm flagellum. Produces force towards the minus ends of microtubules. Dynein has ATPase activity; the force-producing power stroke is thought to occur on release of ADP. Plays a major role in sperm motility, implicated in sperm flagellar assembly and beating. The chain is Dynein axonemal heavy chain 17 from Homo sapiens (Human).